We begin with the raw amino-acid sequence, 267 residues long: Hydroxyethylthiazole kinase (267 aa).

Met46 lines the substrate pocket. Residues Arg122 and Ser168 each contribute to the ATP site. Gly195 serves as a coordination point for substrate.

This sequence belongs to the Thz kinase family. It depends on Mg(2+) as a cofactor.

It catalyses the reaction 5-(2-hydroxyethyl)-4-methylthiazole + ATP = 4-methyl-5-(2-phosphooxyethyl)-thiazole + ADP + H(+). Its pathway is cofactor biosynthesis; thiamine diphosphate biosynthesis; 4-methyl-5-(2-phosphoethyl)-thiazole from 5-(2-hydroxyethyl)-4-methylthiazole: step 1/1. Functionally, catalyzes the phosphorylation of the hydroxyl group of 4-methyl-5-beta-hydroxyethylthiazole (THZ). The polypeptide is Hydroxyethylthiazole kinase (Nitratidesulfovibrio vulgaris (strain DSM 19637 / Miyazaki F) (Desulfovibrio vulgaris)).